The following is a 367-amino-acid chain: Embryonic developmental protein tofu-6 (367 aa).

Residues 13–92 (AGFHIRNIPK…FTLKVTDHKN (80 aa)) enclose the RRM domain. The tract at residues 298–345 (KSILADRLQRKGVCEYLPRSQQPHYAYSRETLLQHNNSGVTAQISNDA) is required for ife-3 interaction.

In terms of assembly, component of the pid-1 variant of the PETISCO complex (also called the pid-3, erh-2, tofu-6, and ife-3 small RNA complex) containing at least pid-1, tofu-6, ife-3, pid-3, and erh-2, which is required for the biogenesis of 21 nucleotide PIWI-interacting RNAs (piRNAs) that possess a uracil residue at the 5'-end (also called 21U-RNAs). Within the pid-1 variant of the PETISCO complex interacts with pid-1. Component of the tost-1 variant of the PETISCO complex (also called the pid-3, erh-2, tofu-6, and ife-3 small RNA complex) containing at least tost-1, tofu-6, ife-3, pid-3, and erh-2, which plays an essential role in embryogenesis. Within the tost-1 variant of the PETISCO complex interacts with tost-1. Within the pid-1 and tost-1 variants of the PETISCO complexes interacts (via C-terminus) with ife-3. Within the pid-1 and tost-1 variants of the PETISCO complexes interacts (via the RRM domain) with pid-3. Within the pid-1 and tost-1 variants of the PETISCO complexes interacts (via the RRM domain) with erh-2. In contrast to the pid-1 variant of the PETISCO complex, the tost-1 variant of the PETISCO complex plays a minor role in the biogenesis of 21U-RNAs. Interacts (via residues 120-314) with the PUCH complex subunit tofu-1 (via residues 82-172); the interaction between the PETISCO and PUCH complex members enhances piRNA production in vivo. In terms of tissue distribution, expression is restricted to the germline (at protein level).

It localises to the cytoplasm. The protein resides in the perinuclear region. It is found in the nucleus. Functionally, component of the pid-1 and tost-1 variants of the PETISCO complexes, which have roles in the biogenesis of a class of 21 nucleotide PIWI-interacting RNAs (piRNAs) that possess a uracil residue at the 5'-end (also called 21U-RNAs) and embryogenesis, respectively. Promotes the biogenesis of 21U-RNAs. Mediates the interaction between the PETISCO complex and the PUCH complex, the endoribonuclease complex processing the 5'-end of precursor piRNAs, thereby enhancing mature piRNA production. Required for chromosome segregation and cell division in early embryos. May have a role in DNA replication. The chain is Embryonic developmental protein tofu-6 from Caenorhabditis elegans.